We begin with the raw amino-acid sequence, 170 residues long: APRG1 tumor suppressor candidate (170 aa).

The helical transmembrane segment at 150-170 threads the bilayer; the sequence is IALALAGPGAILILELSWFLG.

Expressed at high levels in the pancreas and placenta. As to expression, expressed at high levels in the kidney.

Its subcellular location is the membrane. The protein is APRG1 tumor suppressor candidate of Homo sapiens (Human).